We begin with the raw amino-acid sequence, 678 residues long: MGGIKKFKKGEKGENLKFITRNEAVKKLQISLKIFRKLCILKGIHPRDPKKKFKGKHKTYYYSKDIKYLQNEKVLEIIRARKVFKDREKKLINKKQFGALKNLKENRPMITLDHIIKERYPTFQDALKDLDDCLSLIHLFANMDASAKVRENQILACERLAREFQYYIIQSKSLRKVFVSVKGVYYQADVMGETITWITPLNYLSKKEKEVDYGVMISFLEFYQALMKFVNYRLFTSIGLTYPPTIDDAKLRKCDSLINIFESKPQQQTKTNNTTKKSKSTTAAAAATTPVDPKLKKLEEKISKINSKEEKEIKEQIVEEDTNMLQVNSSGISKDFEDLVGNESDNIPKIMDVTTLFKGFHFYISREVPRHMLEFVILSFGGRVSFPGSGDKVKEVNQSITHQIVDRSNSVKVHNTREYIQPQWVFDSVNSKLLLPYSEYTIGVIPPAHLSPFVEYEEDSYIPARKQALDALINSKEFADAKINTNAEQDDDNDNDNDNRKQVDSDGESDDEDDEDLEHLETRYTEELRKEQSKKRKSSEVDDDDEEEEDGEEDGEEEEEEEDGEEESESESESEQVAKPVLTKKQRDELNKQKQAEEDTKLAELMIRKKDKWIYNKVKETNQQRATANQTLLEKRNKVESGKDVNGNVKVAPQPKKPAPLVKKSQQKQQQASKKQKK.

Residues 265-289 (PQQQTKTNNTTKKSKSTTAAAAATT) form a disordered region. Positions 269-289 (TKTNNTTKKSKSTTAAAAATT) are enriched in low complexity. A BRCT domain is found at 352-442 (DVTTLFKGFH…LLLPYSEYTI (91 aa)). 2 disordered regions span residues 485-601 (TNAE…EDTK) and 626-678 (ATAN…KQKK). The span at 505–518 (SDGESDDEDDEDLE) shows a compositional bias: acidic residues. The span at 519-531 (HLETRYTEELRKE) shows a compositional bias: basic and acidic residues. Residues 541–574 (VDDDDEEEEDGEEDGEEEEEEEDGEEESESESES) are compositionally biased toward acidic residues. The stretch at 581–640 (VLTKKQRDELNKQKQAEEDTKLAELMIRKKDKWIYNKVKETNQQRATANQTLLEKRNKVE) forms a coiled coil. Basic and acidic residues-rich tracts occupy residues 585–601 (KQRD…EDTK) and 633–643 (LEKRNKVESGK). Residues 649-678 (VKVAPQPKKPAPLVKKSQQKQQQASKKQKK) show a composition bias toward low complexity.

Belongs to the pescadillo family.

The protein localises to the nucleus. It localises to the nucleolus. Its subcellular location is the nucleoplasm. Its function is as follows. Required for maturation of ribosomal RNAs and formation of the large ribosomal subunit. In Dictyostelium discoideum (Social amoeba), this protein is Pescadillo homolog.